Reading from the N-terminus, the 218-residue chain is Glutathione S-transferase A (218 aa).

N-acetylserine is present on S1. A GST N-terminal domain is found at 2 to 82 (GKPVLHYFNV…YIATKYNLYG (81 aa)). An N6-succinyllysine modification is found at K3. Glutathione contacts are provided by residues Y8, K44, 53-54 (QV), and 66-67 (QS). The 123-residue stretch at 84–206 (DTKERLLIDM…LQPGSQRKPF (123 aa)) folds into the GST C-terminal domain.

Belongs to the GST superfamily. Alpha family. Homodimer or heterodimer of GSTA1 and GSTA2.

The protein resides in the cytoplasm. The catalysed reaction is RX + glutathione = an S-substituted glutathione + a halide anion + H(+). It catalyses the reaction prostaglandin A2 + glutathione = prostaglandin A2-S-(R)-glutathione. The enzyme catalyses prostaglandin J2 + glutathione = prostaglandin J2-S-(R)-glutathione. It carries out the reaction (13S)-hydroperoxy-(9Z,11E)-octadecadienoate + 2 glutathione = (13S)-hydroxy-(9Z,11E)-octadecadienoate + glutathione disulfide + H2O. The catalysed reaction is androst-5-ene-3,17-dione = androst-4-ene-3,17-dione. In terms of biological role, glutathione S-transferase that catalyzes the nucleophilic attack of the sulfur atom of glutathione on the electrophilic groups of a wide range of exogenous and endogenous compounds. Involved in the formation of glutathione conjugates of both prostaglandin A2 (PGA2) and prostaglandin J2 (PGJ2). It also catalyzes the isomerization of D5-androstene-3,17-dione (AD) into D4-androstene-3,17-dione and may therefore play an important role in hormone biosynthesis. Through its glutathione-dependent peroxidase activity toward the fatty acid hydroperoxide (13S)-hydroperoxy-(9Z,11E)-octadecadienoate/13-HPODE it is also involved in the metabolism of oxidized linoleic acid. This chain is Glutathione S-transferase A, found in Cavia porcellus (Guinea pig).